The following is a 471-amino-acid chain: 3-isopropylmalate dehydratase large subunit (471 aa).

Positions 347, 407, and 410 each coordinate [4Fe-4S] cluster.

Belongs to the aconitase/IPM isomerase family. LeuC type 1 subfamily. As to quaternary structure, heterodimer of LeuC and LeuD. [4Fe-4S] cluster serves as cofactor.

It catalyses the reaction (2R,3S)-3-isopropylmalate = (2S)-2-isopropylmalate. The protein operates within amino-acid biosynthesis; L-leucine biosynthesis; L-leucine from 3-methyl-2-oxobutanoate: step 2/4. Catalyzes the isomerization between 2-isopropylmalate and 3-isopropylmalate, via the formation of 2-isopropylmaleate. The chain is 3-isopropylmalate dehydratase large subunit from Geobacillus thermodenitrificans (strain NG80-2).